A 257-amino-acid polypeptide reads, in one-letter code: Phosphonates import ATP-binding protein PhnC (257 aa).

The 245-residue stretch at Ile-2–Ala-246 folds into the ABC transporter domain. Gly-35–Ser-42 provides a ligand contact to ATP.

This sequence belongs to the ABC transporter superfamily. Phosphonates importer (TC 3.A.1.9.1) family. As to quaternary structure, the complex is composed of two ATP-binding proteins (PhnC), two transmembrane proteins (PhnE) and a solute-binding protein (PhnD).

The protein resides in the cell membrane. The enzyme catalyses phosphonate(out) + ATP + H2O = phosphonate(in) + ADP + phosphate + H(+). Functionally, part of the ABC transporter complex PhnCDE involved in phosphonates import. Responsible for energy coupling to the transport system. This Bacillus thuringiensis subsp. konkukian (strain 97-27) protein is Phosphonates import ATP-binding protein PhnC.